The sequence spans 267 residues: Dihydropteroate synthase (267 aa).

A Pterin-binding domain is found at 1–251; sequence MTKTKIMGIL…NVELNAKLAK (251 aa). Asn11 is a Mg(2+) binding site. (7,8-dihydropterin-6-yl)methyl diphosphate contacts are provided by residues Thr51, Asp84, Asn103, Asp167, Lys203, and 239 to 241; that span reads RVH.

Belongs to the DHPS family. In terms of assembly, homodimer. Requires Mg(2+) as cofactor.

It catalyses the reaction (7,8-dihydropterin-6-yl)methyl diphosphate + 4-aminobenzoate = 7,8-dihydropteroate + diphosphate. It participates in cofactor biosynthesis; tetrahydrofolate biosynthesis; 7,8-dihydrofolate from 2-amino-4-hydroxy-6-hydroxymethyl-7,8-dihydropteridine diphosphate and 4-aminobenzoate: step 1/2. Catalyzes the condensation of para-aminobenzoate (pABA) with 6-hydroxymethyl-7,8-dihydropterin diphosphate (DHPt-PP) to form 7,8-dihydropteroate (H2Pte), the immediate precursor of folate derivatives. The protein is Dihydropteroate synthase (folP) of Staphylococcus aureus (strain MSSA476).